Here is a 495-residue protein sequence, read N- to C-terminus: Aspartyl/glutamyl-tRNA(Asn/Gln) amidotransferase subunit B (495 aa).

Belongs to the GatB/GatE family. GatB subfamily. As to quaternary structure, heterotrimer of A, B and C subunits.

The enzyme catalyses L-glutamyl-tRNA(Gln) + L-glutamine + ATP + H2O = L-glutaminyl-tRNA(Gln) + L-glutamate + ADP + phosphate + H(+). It carries out the reaction L-aspartyl-tRNA(Asn) + L-glutamine + ATP + H2O = L-asparaginyl-tRNA(Asn) + L-glutamate + ADP + phosphate + 2 H(+). In terms of biological role, allows the formation of correctly charged Asn-tRNA(Asn) or Gln-tRNA(Gln) through the transamidation of misacylated Asp-tRNA(Asn) or Glu-tRNA(Gln) in organisms which lack either or both of asparaginyl-tRNA or glutaminyl-tRNA synthetases. The reaction takes place in the presence of glutamine and ATP through an activated phospho-Asp-tRNA(Asn) or phospho-Glu-tRNA(Gln). This Rippkaea orientalis (strain PCC 8801 / RF-1) (Cyanothece sp. (strain PCC 8801)) protein is Aspartyl/glutamyl-tRNA(Asn/Gln) amidotransferase subunit B.